A 216-amino-acid chain; its full sequence is Talanin (216 aa).

As to expression, isoform 4 is expressed in placenta, lung, kidney and pancreas.

May play a role in uric acid excretion. The protein is Talanin (ZNF365) of Homo sapiens (Human).